The chain runs to 542 residues: Chaperonin GroEL (542 aa).

Residues 29-32 (TLGP), Lys-50, 86-90 (DGTTT), Gly-414, and Asp-494 contribute to the ATP site.

It belongs to the chaperonin (HSP60) family. In terms of assembly, forms a cylinder of 14 subunits composed of two heptameric rings stacked back-to-back. Interacts with the co-chaperonin GroES.

The protein localises to the cytoplasm. The enzyme catalyses ATP + H2O + a folded polypeptide = ADP + phosphate + an unfolded polypeptide.. In terms of biological role, together with its co-chaperonin GroES, plays an essential role in assisting protein folding. The GroEL-GroES system forms a nano-cage that allows encapsulation of the non-native substrate proteins and provides a physical environment optimized to promote and accelerate protein folding. This Cytophaga hutchinsonii (strain ATCC 33406 / DSM 1761 / CIP 103989 / NBRC 15051 / NCIMB 9469 / D465) protein is Chaperonin GroEL.